Consider the following 1770-residue polypeptide: U3 small nucleolar RNA-associated protein 10 (1770 aa).

2 consecutive transmembrane segments (helical) span residues 499 to 519 and 528 to 548; these read ILGL…FLSS and LTFL…RLLA. An HEAT repeat occupies 1730–1768; the sequence is MVPIIAELLEDDNEEVESEVRGGLVRVMENVLGEPFDRY.

This sequence belongs to the HEATR1/UTP10 family. As to quaternary structure, component of the ribosomal small subunit (SSU) processome.

The protein localises to the nucleus. It is found in the nucleolus. It localises to the membrane. Its function is as follows. Involved in nucleolar processing of pre-18S ribosomal RNA. Involved in ribosome biosynthesis. The chain is U3 small nucleolar RNA-associated protein 10 from Candida glabrata (strain ATCC 2001 / BCRC 20586 / JCM 3761 / NBRC 0622 / NRRL Y-65 / CBS 138) (Yeast).